The primary structure comprises 331 residues: Ketol-acid reductoisomerase (NADP(+)) (331 aa).

Positions 3–183 constitute a KARI N-terminal Rossmann domain; the sequence is AQMYYDDDAD…GGTRAGALKT (181 aa). NADP(+)-binding positions include 26 to 29, Ser52, and Ser54; that span reads YGSQ. The active site involves His109. Gly135 contacts NADP(+). The KARI C-terminal knotted domain maps to 184–329; it reads TFKEETETDL…TELRSLMSWL (146 aa). Residues Asp192, Glu196, Glu228, and Glu232 each contribute to the Mg(2+) site. Ser253 serves as a coordination point for substrate.

This sequence belongs to the ketol-acid reductoisomerase family. Mg(2+) serves as cofactor.

It catalyses the reaction (2R)-2,3-dihydroxy-3-methylbutanoate + NADP(+) = (2S)-2-acetolactate + NADPH + H(+). It carries out the reaction (2R,3R)-2,3-dihydroxy-3-methylpentanoate + NADP(+) = (S)-2-ethyl-2-hydroxy-3-oxobutanoate + NADPH + H(+). It participates in amino-acid biosynthesis; L-isoleucine biosynthesis; L-isoleucine from 2-oxobutanoate: step 2/4. Its pathway is amino-acid biosynthesis; L-valine biosynthesis; L-valine from pyruvate: step 2/4. Functionally, involved in the biosynthesis of branched-chain amino acids (BCAA). Catalyzes an alkyl-migration followed by a ketol-acid reduction of (S)-2-acetolactate (S2AL) to yield (R)-2,3-dihydroxy-isovalerate. In the isomerase reaction, S2AL is rearranged via a Mg-dependent methyl migration to produce 3-hydroxy-3-methyl-2-ketobutyrate (HMKB). In the reductase reaction, this 2-ketoacid undergoes a metal-dependent reduction by NADPH to yield (R)-2,3-dihydroxy-isovalerate. This Thermobifida fusca (strain YX) protein is Ketol-acid reductoisomerase (NADP(+)).